Here is a 199-residue protein sequence, read N- to C-terminus: N-(5'-phosphoribosyl)anthranilate isomerase (199 aa).

The protein belongs to the TrpF family.

It carries out the reaction N-(5-phospho-beta-D-ribosyl)anthranilate = 1-(2-carboxyphenylamino)-1-deoxy-D-ribulose 5-phosphate. The protein operates within amino-acid biosynthesis; L-tryptophan biosynthesis; L-tryptophan from chorismate: step 3/5. The sequence is that of N-(5'-phosphoribosyl)anthranilate isomerase from Clostridium kluyveri (strain NBRC 12016).